The primary structure comprises 462 residues: Elongation factor 1-alpha 1 (462 aa).

Gly2 carries the n,N,N-trimethylglycine modification. In terms of domain architecture, tr-type G spans 5–242 (KTHINIVVIG…DCILPPTRPT (238 aa)). A G1 region spans residues 14-21 (GHVDSGKS). 14–21 (GHVDSGKS) contributes to the GTP binding site. An N6,N6,N6-trimethyllysine; alternate modification is found at Lys36. The residue at position 36 (Lys36) is an N6,N6-dimethyllysine; alternate. Lys36 bears the N6-methyllysine; alternate mark. Residue Lys55 is modified to N6,N6-dimethyllysine. The tract at residues 70 to 74 (GITID) is G2. Lys79 is subject to N6,N6,N6-trimethyllysine; by EEF1AKMT1. The interval 91–94 (DAPG) is G3. 153-156 (NKMD) contributes to the GTP binding site. The segment at 153–156 (NKMD) is G4. Lys165 bears the N6,N6,N6-trimethyllysine; alternate; by EEF1AKMT3 mark. Lys165 carries the post-translational modification N6,N6-dimethyllysine; alternate; by EEF1AKMT3. An N6-acetyllysine; alternate modification is found at Lys165. The residue at position 165 (Lys165) is an N6-methyllysine; alternate; by EEF1AKMT3. Lys172 carries the N6-acetyllysine modification. A GTP-binding site is contributed by 194-196 (SGW). The G5 stretch occupies residues 194–196 (SGW). Residue Lys273 is modified to N6-acetyllysine. Ser300 carries the phosphoserine; by TGFBR1 modification. A 5-glutamyl glycerylphosphorylethanolamine modification is found at Glu301. Lys318 is modified (N6,N6,N6-trimethyllysine; by EEF1AKMT2). The residue at position 374 (Glu374) is a 5-glutamyl glycerylphosphorylethanolamine. Lys385 is covalently cross-linked (Glycyl lysine isopeptide (Lys-Gly) (interchain with G-Cter in ubiquitin)). The residue at position 392 (Lys392) is an N6-acetyllysine; alternate. An N6-succinyllysine; alternate modification is found at Lys392. Position 432 is a phosphothreonine; by PASK (Thr432). Lys439 bears the N6-acetyllysine mark.

It belongs to the TRAFAC class translation factor GTPase superfamily. Classic translation factor GTPase family. EF-Tu/EF-1A subfamily. As to quaternary structure, found in a nuclear export complex with XPO5, EEF1A1, Ran and aminoacylated tRNA. Interacts with PARP1 and TXK. Interacts with KARS1. May interact with ERGIC2. Interacts with IFIT1 (via TPR repeats 4-7). Interacts with DLC1, facilitating distribution to the membrane periphery and ruffles upon growth factor stimulation. Interacts with ZPR1; the interaction occurs in a epidermal growth factor (EGF)-dependent manner. Interacts with PPP1R16B. Interacts with SPHK1 and SPHK2; both interactions increase SPHK1 and SPHK2 kinase activity. Interacts with guanyl-nucleotide exchange factor EEF1B2. Interacts (via middle-region) with HTATIP2 (via N-terminus); the interaction is direct and competes with EEF1A1 binding to guanyl-nucleotide exchange factor EEF1B2, thereby inhibiting GDP for GTP exchange and reactivation of EEF1A1. Interacts with tRNA. Post-translationally, ISGylated. In terms of processing, phosphorylated by TXK. Phosphorylation by PASK increases translation efficiency. Phosphorylated by ROCK2. Phosphorylation by TGFBR1 inhibits translation elongation. Trimethylated at Lys-79 by EEF1AKMT1. Methylated at Lys-165 by EEF1AKMT3, methylation by EEF1AKMT3 is dynamic as well as inducible by stress conditions, such as ER-stress, and plays a regulatory role on mRNA translation. Trimethylated at Lys-318 by EEF1AKMT2. Mono-, di-, and trimethylated at Lys-36 by EEF1AKMT4; trimethylated form is predominant. Methylation by EEF1AKMT4 contributes to the fine-tuning of translation rates for a subset of tRNAs. Trimethylated at Gly-2 by METTL13. Mono- and dimethylated at Lys-55 by METTL13; dimethylated form is predominant. Post-translationally, ubiquitinated at Lys-385 by RNF14 in response to ribosome collisions (ribosome stalling), leading to its degradation by the proteasome and rescue of stalled ribosomes.

It is found in the cytoplasm. It localises to the nucleus. The protein localises to the nucleolus. The protein resides in the cell membrane. The enzyme catalyses GTP + H2O = GDP + phosphate + H(+). Functionally, translation elongation factor that catalyzes the GTP-dependent binding of aminoacyl-tRNA (aa-tRNA) to the A-site of ribosomes during the elongation phase of protein synthesis. Base pairing between the mRNA codon and the aa-tRNA anticodon promotes GTP hydrolysis, releasing the aa-tRNA from EEF1A1 and allowing its accommodation into the ribosome. The growing protein chain is subsequently transferred from the P-site peptidyl tRNA to the A-site aa-tRNA, extending it by one amino acid through ribosome-catalyzed peptide bond formation. Also plays a role in the positive regulation of IFNG transcription in T-helper 1 cells as part of an IFNG promoter-binding complex with TXK and PARP1. Also plays a role in cytoskeleton organization by promoting actin bundling. This is Elongation factor 1-alpha 1 (EEF1A1) from Cricetulus griseus (Chinese hamster).